The following is a 185-amino-acid chain: Large ribosomal subunit protein uL5 (185 aa).

This sequence belongs to the universal ribosomal protein uL5 family. As to quaternary structure, part of the 50S ribosomal subunit; part of the 5S rRNA/L5/L18/L25 subcomplex. Contacts the 5S rRNA and the P site tRNA. Forms a bridge to the 30S subunit in the 70S ribosome.

Its function is as follows. This is one of the proteins that bind and probably mediate the attachment of the 5S RNA into the large ribosomal subunit, where it forms part of the central protuberance. In the 70S ribosome it contacts protein S13 of the 30S subunit (bridge B1b), connecting the 2 subunits; this bridge is implicated in subunit movement. Contacts the P site tRNA; the 5S rRNA and some of its associated proteins might help stabilize positioning of ribosome-bound tRNAs. In Rhodopseudomonas palustris (strain BisB18), this protein is Large ribosomal subunit protein uL5.